The chain runs to 264 residues: Zinc finger protein CG30 (264 aa).

The RING-type zinc finger occupies 8-63 (CNICFSVAEIKNYFLQPIDRLTIIPVLELDTCKHQLCSMCIRKIRKRKKVPCPLCR).

It localises to the host nucleus. Plays a role in the proper expression of late and very late genes. In Autographa californica nuclear polyhedrosis virus (AcMNPV), this protein is Zinc finger protein CG30 (CG30).